The chain runs to 269 residues: Aquaporin-1 (269 aa).

The Cytoplasmic segment spans residues 1–11 (MASEIKKKLFW). The helical transmembrane segment at 12-29 (RAVVAEFLAMTLFVFISI) threads the bilayer. The Extracellular portion of the chain corresponds to 30 to 46 (GSALGFNYPLERNQTLV). A helical membrane pass occupies residues 47–65 (QDNVKVSLAFGLSIATLAQ). The Cytoplasmic segment spans residues 66–68 (SVG). An intramembrane segment occupies 69–82 (HISGAHLNPAVTLG). Residues 76–78 (NPA) carry the NPA 1 motif. The Cytoplasmic portion of the chain corresponds to 83–90 (LLLSCQIS). Residues 91–109 (ILRAVMYIIAQCVGAIVAT) form a helical membrane-spanning segment. The Extracellular segment spans residues 110 to 133 (AILSGITSSLVDNSLGRNDLAHGV). Residues 134 to 153 (NSGQGLGIEIIGTLQLVLCV) form a helical membrane-spanning segment. Topologically, residues 154-163 (LATTDRRRRD) are cytoplasmic. Residues 164-181 (LGGSAPLAIGLSVALGHL) traverse the membrane as a helical segment. At 182 to 186 (LAIDY) the chain is on the extracellular side. The stretch at 187 to 199 (TGCGINPARSFGS) is an intramembrane region. The short motif at 192-194 (NPA) is the NPA 2 element. Topologically, residues 200-206 (AVLTRNF) are extracellular. A glycan (N-linked (GlcNAc...) asparagine) is linked at asparagine 205. A helical transmembrane segment spans residues 207 to 224 (SNHWIFWVGPFIGGALAV). The Cytoplasmic segment spans residues 225–269 (LIYDFILAPRSSDFTDRMKVWTSGQVEEYDLDADDINSRVEMKPK). Serine 247 carries the post-translational modification Phosphoserine. Tyrosine 253 bears the Phosphotyrosine mark. Residue serine 262 is modified to Phosphoserine.

This sequence belongs to the MIP/aquaporin (TC 1.A.8) family. In terms of assembly, homotetramer; each monomer provides an independent water pore. Component of the ankyrin-1 complex in the erythrocyte, composed of ANK1, RHCE, RHAG, SLC4A1, EPB42, GYPA, GYPB and AQP1. Interacts with EPHB2; involved in endolymph production in the inner ear. Identified in a complex with STOM. Interacts (via the N-terminal) with ANK1 (via ANK 1-5 repeats). Interacts (via the C-terminal) with EPB42. In terms of tissue distribution, detected in erythrocytes (at protein level). In the kidney, expressed on luminal and basal borders of proximal tubules and in the thin limb of Henle's loop (at protein level).

The protein localises to the cell membrane. The enzyme catalyses H2O(in) = H2O(out). It carries out the reaction nitric oxide(out) = nitric oxide(in). It catalyses the reaction CO2(out) = CO2(in). The catalysed reaction is glycerol(in) = glycerol(out). The enzyme catalyses H2O2(out) = H2O2(in). It carries out the reaction K(+)(in) = K(+)(out). It catalyses the reaction Na(+)(in) = Na(+)(out). In terms of biological role, forms a water channel that facilitates the transport of water across cell membranes, playing a crucial role in water homeostasis in various tissues. Could also be permeable to small solutes including hydrogen peroxide, glycerol and gases such as amonnia (NH3), nitric oxide (NO) and carbon dioxide (CO2). Recruited to the ankyrin-1 complex, a multiprotein complex of the erythrocyte membrane, it could be part of a CO2 metabolon, linking facilitated diffusion of CO2 across the membrane, anion exchange of Cl(-)/HCO3(-) and interconversion of dissolved CO2 and carbonic acid in the cytosol. In vitro, it shows non-selective gated cation channel activity and may be permeable to cations like K(+) and Na(+) in vivo. This chain is Aquaporin-1, found in Mus musculus (Mouse).